The following is a 333-amino-acid chain: tRNA-modifying protein YgfZ (333 aa).

Folate is bound by residues W33 and W195.

Belongs to the tRNA-modifying YgfZ family.

The protein localises to the cytoplasm. Its function is as follows. Folate-binding protein involved in regulating the level of ATP-DnaA and in the modification of some tRNAs. It is probably a key factor in regulatory networks that act via tRNA modification, such as initiation of chromosomal replication. This is tRNA-modifying protein YgfZ from Pectobacterium carotovorum subsp. carotovorum (strain PC1).